Consider the following 343-residue polypeptide: Glyceraldehyde-3-phosphate dehydrogenase (343 aa).

NAD(+) contacts are provided by residues 13–14 (TI) and glycine 111. 140–142 (SCN) is a binding site for D-glyceraldehyde 3-phosphate. Cysteine 141 acts as the Nucleophile in catalysis. Arginine 169 is an NAD(+) binding site. 195–196 (HA) contributes to the D-glyceraldehyde 3-phosphate binding site. Glutamine 303 is a binding site for NAD(+).

Belongs to the glyceraldehyde-3-phosphate dehydrogenase family. Homotetramer.

The protein localises to the cytoplasm. The enzyme catalyses D-glyceraldehyde 3-phosphate + phosphate + NADP(+) = (2R)-3-phospho-glyceroyl phosphate + NADPH + H(+). It carries out the reaction D-glyceraldehyde 3-phosphate + phosphate + NAD(+) = (2R)-3-phospho-glyceroyl phosphate + NADH + H(+). It functions in the pathway carbohydrate degradation; glycolysis; pyruvate from D-glyceraldehyde 3-phosphate: step 1/5. The sequence is that of Glyceraldehyde-3-phosphate dehydrogenase from Sulfurisphaera tokodaii (strain DSM 16993 / JCM 10545 / NBRC 100140 / 7) (Sulfolobus tokodaii).